We begin with the raw amino-acid sequence, 370 residues long: Proline-rich protein 5-like (370 aa).

Ser28 is modified (phosphoserine). Disordered stretches follow at residues 312–346 (LGEEAGGEDKHLLLPPSFPPPHRQCSSEPSILDSP) and 351–370 (LEDVASGSQEDSELNCASLS).

It belongs to the PROTOR family. As to quaternary structure, interacts with the mammalian target of rapamycin complex 2 (mTORC2) which contains MTOR, MLST8, PRR5, RICTOR, MAPKAP1 and DEPTOR. Interacts with RFFL. Interacts (via C-terminus) with ZFP36 (via C-terminus); this interaction may accelerate ZFP36-mediated mRNA decay during stress. Interacts with RICTOR. Post-translationally, ubiquitinated. Ubiquitination by RFFL promotes proteasomal degradation of PRR5L thereby modifying the substrate-specific activity of the mTORC2 complex. Ubiquitination by RFFL is stimulated by LPA/lysophosphatidic acid.

Its function is as follows. Associates with the mTORC2 complex that regulates cellular processes including survival and organization of the cytoskeleton. Regulates the activity of the mTORC2 complex in a substrate-specific manner preventing for instance the specific phosphorylation of PKCs and thereby controlling cell migration. Plays a role in the stimulation of ZFP36-mediated mRNA decay of several ZFP36-associated mRNAs, such as TNF-alpha and GM-CSF, in response to stress. Required for ZFP36 localization to cytoplasmic stress granule (SG) and P-body (PB) in response to stress. The polypeptide is Proline-rich protein 5-like (Prr5l) (Mus musculus (Mouse)).